The following is a 478-amino-acid chain: Protein nucleotidyltransferase YdiU (478 aa).

8 residues coordinate ATP: Gly84, Gly86, Arg87, Lys107, Asp119, Gly120, Arg170, and Arg177. Asp246 (proton acceptor) is an active-site residue. Residues Asn247 and Asp256 each contribute to the Mg(2+) site. Asp256 provides a ligand contact to ATP.

The protein belongs to the SELO family. It depends on Mg(2+) as a cofactor. Mn(2+) is required as a cofactor.

The catalysed reaction is L-seryl-[protein] + ATP = 3-O-(5'-adenylyl)-L-seryl-[protein] + diphosphate. It carries out the reaction L-threonyl-[protein] + ATP = 3-O-(5'-adenylyl)-L-threonyl-[protein] + diphosphate. The enzyme catalyses L-tyrosyl-[protein] + ATP = O-(5'-adenylyl)-L-tyrosyl-[protein] + diphosphate. It catalyses the reaction L-histidyl-[protein] + UTP = N(tele)-(5'-uridylyl)-L-histidyl-[protein] + diphosphate. The catalysed reaction is L-seryl-[protein] + UTP = O-(5'-uridylyl)-L-seryl-[protein] + diphosphate. It carries out the reaction L-tyrosyl-[protein] + UTP = O-(5'-uridylyl)-L-tyrosyl-[protein] + diphosphate. Functionally, nucleotidyltransferase involved in the post-translational modification of proteins. It can catalyze the addition of adenosine monophosphate (AMP) or uridine monophosphate (UMP) to a protein, resulting in modifications known as AMPylation and UMPylation. The polypeptide is Protein nucleotidyltransferase YdiU (Shigella boydii serotype 4 (strain Sb227)).